Consider the following 500-residue polypeptide: ATP synthase subunit alpha (500 aa).

169 to 176 provides a ligand contact to ATP; it reads GDRQTGKT.

Belongs to the ATPase alpha/beta chains family. In terms of assembly, F-type ATPases have 2 components, CF(1) - the catalytic core - and CF(0) - the membrane proton channel. CF(1) has five subunits: alpha(3), beta(3), gamma(1), delta(1), epsilon(1). CF(0) has three main subunits: a(1), b(2) and c(9-12). The alpha and beta chains form an alternating ring which encloses part of the gamma chain. CF(1) is attached to CF(0) by a central stalk formed by the gamma and epsilon chains, while a peripheral stalk is formed by the delta and b chains.

The protein resides in the cell membrane. It catalyses the reaction ATP + H2O + 4 H(+)(in) = ADP + phosphate + 5 H(+)(out). Its function is as follows. Produces ATP from ADP in the presence of a proton gradient across the membrane. The alpha chain is a regulatory subunit. This Lactococcus lactis subsp. lactis (strain IL1403) (Streptococcus lactis) protein is ATP synthase subunit alpha.